A 442-amino-acid chain; its full sequence is Dol-P-Man:Man(5)GlcNAc(2)-PP-Dol alpha-1,3-mannosyltransferase (442 aa).

Over 1–34 (MAAPSSRPESNPPLYKQALDFALDVANGRHALSK) the chain is Lumenal. Residues 35–55 (LIPPALFLVDALLCGLIIWKV) traverse the membrane as a helical segment. At 56–84 (PYTEIDWAAYMEQVSQILSGERDYTKVRG) the chain is on the cytoplasmic side. A helical membrane pass occupies residues 85-105 (GTGPLVYPAAHVYIYTGLYHL). Topologically, residues 106-111 (TDEGRN) are lumenal. Residues 112 to 132 (ILLAQQLFAGLYMVTLAVVMG) form a helical membrane-spanning segment. The Cytoplasmic portion of the chain corresponds to 133–155 (CYWQAKAPPYLFPLLTLSKRLHS). Residues 156–176 (IFVLRCFNDCFAVLFLWLAIF) form a helical membrane-spanning segment. The Lumenal segment spans residues 177-198 (FFQRRNWQAGALLYTLGLGVKM). Residues 199 to 219 (TLLLSLPAVGIVLFLGSGSFV) traverse the membrane as a helical segment. Residue T220 is a topological domain, cytoplasmic. Residues 221–241 (TLQLVATMGLVQILIGVPFLA) traverse the membrane as a helical segment. At 242-272 (HYPTEYLSRAFELSRQFFFKWTVNWRFVGEE) the chain is on the lumenal side. Residues 273-293 (IFLSKGFALTLLALHVLVLGI) form a helical membrane-spanning segment. At 294 to 333 (FITTRWIKPARKSLVQLISPVLLAGKPPLTVPEHRAAARD) the chain is on the cytoplasmic side. A helical membrane pass occupies residues 334–354 (VTPRYIMTTILSANAVGLLFA). The Lumenal segment spans residues 355–376 (RSLHYQFYAYVAWSTPFLLWRA). A helical membrane pass occupies residues 377–397 (GLHPVLVYLLWAVHEWAWNVF). The Cytoplasmic portion of the chain corresponds to 398–401 (PSTP). The chain crosses the membrane as a helical span at residues 402-422 (ASSAVVVGVLGVTVAGVWFGA). At 423-442 (REEWEPGMKSSSKKEEAAMR) the chain is on the lumenal side.

This sequence belongs to the glycosyltransferase ALG3 family.

Its subcellular location is the endoplasmic reticulum membrane. It carries out the reaction an alpha-D-Man-(1-&gt;2)-alpha-D-Man-(1-&gt;2)-alpha-D-Man-(1-&gt;3)-[alpha-D-Man-(1-&gt;6)]-beta-D-Man-(1-&gt;4)-beta-D-GlcNAc-(1-&gt;4)-alpha-D-GlcNAc-diphospho-di-trans,poly-cis-dolichol + a di-trans,poly-cis-dolichyl beta-D-mannosyl phosphate = an alpha-D-Man-(1-&gt;2)-alpha-D-Man-(1-&gt;2)-alpha-D-Man-(1-&gt;3)-[alpha-D-Man-(1-&gt;3)-alpha-D-Man-(1-&gt;6)]-beta-D-Man-(1-&gt;4)-beta-D-GlcNAc-(1-&gt;4)-alpha-D-GlcNAc-diphospho-di-trans,poly-cis-dolichol + a di-trans,poly-cis-dolichyl phosphate + H(+). It participates in protein modification; protein glycosylation. Functionally, dol-P-Man:Man(5)GlcNAc(2)-PP-Dol alpha-1,3-mannosyltransferase that operates in the biosynthetic pathway of dolichol-linked oligosaccharides, the glycan precursors employed in protein asparagine (N)-glycosylation. The assembly of dolichol-linked oligosaccharides begins on the cytosolic side of the endoplasmic reticulum membrane and finishes in its lumen. The sequential addition of sugars to dolichol pyrophosphate produces dolichol-linked oligosaccharides containing fourteen sugars, including two GlcNAcs, nine mannoses and three glucoses. Once assembled, the oligosaccharide is transferred from the lipid to nascent proteins by oligosaccharyltransferases. In the lumen of the endoplasmic reticulum, adds the first dolichyl beta-D-mannosyl phosphate derived mannose in an alpha-1,3 linkage to Man(5)GlcNAc(2)-PP-dolichol to produce Man(6)GlcNAc(2)-PP-dolichol. The protein is Dol-P-Man:Man(5)GlcNAc(2)-PP-Dol alpha-1,3-mannosyltransferase (alg-3) of Neurospora crassa (strain ATCC 24698 / 74-OR23-1A / CBS 708.71 / DSM 1257 / FGSC 987).